The sequence spans 371 residues: MNQRHLWTIVALSVTVLGTPAVGRTQTTKATAPAQQILASDAVKVGEFQSSEGKRTSDAVITSIHPHNLGGRRAATLFIRKIPVLTFVSSNPVASVETKVGAIGDNEGVQPYALNTEKSVQVASLGNLADARIQNRSQNDDPVKRASLVAAKINQLIRDNVKADQITVSWKGADSSLVASQSQNKSSSSQQKSERYTIKVKNQELVEINQNTRLADSTNNLANDALQATNRLRRLVGNASPLKEIANLPARSPKRSSNPIANLPQRIASSIRLSFQGIASFYGRGDGFAGRPTATGERFNPEAMTAAHRSLPFGTRVRVTNTRNGRSVVVRINDRGPFTRGRVIDLSTGAARVLGMIGSGVAPVRIEVLGR.

Residues 1–25 (MNQRHLWTIVALSVTVLGTPAVGRT) form the signal peptide. Low complexity predominate over residues 177 to 191 (LVASQSQNKSSSSQQ). The interval 177–196 (LVASQSQNKSSSSQQKSERY) is disordered.

This sequence belongs to the RlpA family.

Functionally, lytic transglycosylase with a strong preference for naked glycan strands that lack stem peptides. The sequence is that of Probable endolytic peptidoglycan transglycosylase RlpA from Nostoc sp. (strain PCC 7120 / SAG 25.82 / UTEX 2576).